We begin with the raw amino-acid sequence, 183 residues long: Phosphinothricin N-acetyltransferase (183 aa).

In terms of domain architecture, N-acetyltransferase spans 8-173; the sequence is ADIRRATEAD…WQLDFSLPVP (166 aa). Acetyl-CoA-binding positions include 91 to 93, 99 to 104, and asparagine 130; these read VYV and RTGLGS.

This sequence belongs to the acetyltransferase family. PAT/BAR subfamily.

It catalyses the reaction phosphinothricin + acetyl-CoA = N-acetylphosphinothricin + CoA + H(+). Inactivates phosphinothricin (PPT) by transfer of an acetyl group from acetyl CoA. Can also acetylate demethylphosphinothricin but not PTT or glutamate. This enzyme is an effector of phosphinothricin tripeptide (PTT or bialaphos) resistance. This Streptomyces hygroscopicus protein is Phosphinothricin N-acetyltransferase.